A 166-amino-acid chain; its full sequence is Endoribonuclease YbeY (166 aa).

Zn(2+) is bound by residues His-126, His-130, and His-136.

This sequence belongs to the endoribonuclease YbeY family. Requires Zn(2+) as cofactor.

It localises to the cytoplasm. In terms of biological role, single strand-specific metallo-endoribonuclease involved in late-stage 70S ribosome quality control and in maturation of the 3' terminus of the 16S rRNA. In Laribacter hongkongensis (strain HLHK9), this protein is Endoribonuclease YbeY.